Reading from the N-terminus, the 275-residue chain is Large ribosomal subunit protein uL2c (275 aa).

A disordered region spans residues 225-256; the sequence is AMNAVDHPHGGGEGRSPIGRSQPSTPWGRPAL.

Belongs to the universal ribosomal protein uL2 family. As to quaternary structure, part of the 50S ribosomal subunit.

The protein resides in the plastid. It is found in the chloroplast. The sequence is that of Large ribosomal subunit protein uL2c (rpl2) from Cyanidium caldarium (Red alga).